A 647-amino-acid chain; its full sequence is Threonine--tRNA ligase (647 aa).

A TGS domain is found at 1–61 (MINITFPDGA…TEDGSIEIVT (61 aa)). The interval 242-540 (DHRKLGKELD…LIENYKGAFP (299 aa)) is catalytic. Residues cysteine 336, histidine 387, and histidine 517 each contribute to the Zn(2+) site.

This sequence belongs to the class-II aminoacyl-tRNA synthetase family. As to quaternary structure, homodimer. Requires Zn(2+) as cofactor.

It localises to the cytoplasm. It catalyses the reaction tRNA(Thr) + L-threonine + ATP = L-threonyl-tRNA(Thr) + AMP + diphosphate + H(+). Catalyzes the attachment of threonine to tRNA(Thr) in a two-step reaction: L-threonine is first activated by ATP to form Thr-AMP and then transferred to the acceptor end of tRNA(Thr). Also edits incorrectly charged L-seryl-tRNA(Thr). This Streptococcus pneumoniae (strain 70585) protein is Threonine--tRNA ligase.